An 83-amino-acid polypeptide reads, in one-letter code: Cell division topological specificity factor (83 aa).

Belongs to the MinE family.

Functionally, prevents the cell division inhibition by proteins MinC and MinD at internal division sites while permitting inhibition at polar sites. This ensures cell division at the proper site by restricting the formation of a division septum at the midpoint of the long axis of the cell. The sequence is that of Cell division topological specificity factor from Alcanivorax borkumensis (strain ATCC 700651 / DSM 11573 / NCIMB 13689 / SK2).